The chain runs to 268 residues: Tryptophan synthase alpha chain (268 aa).

Catalysis depends on proton acceptor residues Glu49 and Asp60.

The protein belongs to the TrpA family. Tetramer of two alpha and two beta chains.

The enzyme catalyses (1S,2R)-1-C-(indol-3-yl)glycerol 3-phosphate + L-serine = D-glyceraldehyde 3-phosphate + L-tryptophan + H2O. It functions in the pathway amino-acid biosynthesis; L-tryptophan biosynthesis; L-tryptophan from chorismate: step 5/5. Functionally, the alpha subunit is responsible for the aldol cleavage of indoleglycerol phosphate to indole and glyceraldehyde 3-phosphate. This chain is Tryptophan synthase alpha chain, found in Aliivibrio fischeri (strain MJ11) (Vibrio fischeri).